Reading from the N-terminus, the 629-residue chain is DNA topoisomerase 4 subunit B (629 aa).

ATP is bound by residues Y4, N41, D68, 109–115 (GLHGVGI), and K333. The 114-residue stretch at 411–524 (AELFLVEGDS…AGHVYVAMPP (114 aa)) folds into the Toprim domain. Residues E417, D489, and D491 each contribute to the Mg(2+) site.

This sequence belongs to the type II topoisomerase family. ParE type 1 subfamily. In terms of assembly, heterotetramer composed of ParC and ParE. It depends on Mg(2+) as a cofactor. Mn(2+) serves as cofactor. Ca(2+) is required as a cofactor.

The enzyme catalyses ATP-dependent breakage, passage and rejoining of double-stranded DNA.. In terms of biological role, topoisomerase IV is essential for chromosome segregation. It relaxes supercoiled DNA. Performs the decatenation events required during the replication of a circular DNA molecule. This is DNA topoisomerase 4 subunit B from Pseudomonas aeruginosa (strain ATCC 15692 / DSM 22644 / CIP 104116 / JCM 14847 / LMG 12228 / 1C / PRS 101 / PAO1).